The primary structure comprises 3177 residues: MASSAHLVTIKRSGDDGAHFPLSLSSCLFGRSIECDIRIQLPVVSKRHCKIEVKEQEAILYNFSSTNPTQVNGVTIDEPVRLRHGDIITIIDRSFRYEDGNHEDGSKPTEFPGKSLGKEPSRRASRDSFCADPDGEGQDTKASKMTASRRSFVYAKGLSADSPASDGSKNSVSQDSSGHVEQHTGRNIVEPTSGDLFKKSRSTGSSYREPKSSPTQSLSNSNEKESPFEKLYQSMKEELDVKSQKSCRKSEPQPDRAAEESRETQLLVSGRARAKSSGSTPVTAASSPKVGKIWTERWRGGMVPVQTSTETAKMKTPVRHSQQLKDEDSRVTGRRHSVNLDEGESAQAVHKTVTPGKLATRNQAAVEAGDVASPADTPEHSSSKKRSIPAKVEAPSAETQKRLSLTQRLVPGEKKTPKGSFSKPEKLATAAEQTCSGLPGLSSVDISNFGDSINKSEGMPMKRRRVSFGGHLRPELFDENLPPNTPLKRGETPTKRKSLGTHSPAVLKTIIKERPQSPGKQESPGITPPRTNDQRRRSGRTSSGSKFLCETDIPKKAGRKSGNLPAKRASISRSQHGILQMICSKRRSGASEANLIVAKSWADVVKLGVKQTQTKVAKHVPQKQTSKRQRRPSTPKKPTSNLHNQFTTGHANSPCTIVVGRAQIEKVSVPARPYKMLNNLMLNRKVDFSEDLSGLTEMFKTPVKEKQQQMSDTGSVLSNSANLSERQLQVTNSGDIPEPITTEILGEKVLSSTRNAAKQQSDRYSASPTLRRRSIKHENTVQTPKNVHNITDLEKKTPVSETEPLKTASSVSKLRRSRELRHTLVETMNEKTEAVLAENTTARHLRGTFREQKVDQQVQDNENAPQRCKESGELSEGSEKTSARRSSARKQKPTKDLLGSQMVTQTADYAEELLSQGQGTIQNLEESMHMQNTSISEDQGITEKKVNIIVYATKEKHSPKTPGKKAQPLEGPAGLKEHFETPNPKDKPITEDRTRVLCKSPQVTTENITTNTKPQTSTSGKKVDMKEESSALTKRIHMPGESRHNPKILKLECEDIKALKQSENEMLTSTVNGSKRTLEKSKKKAQPLEDLTCFQELFISPVPTNIIKKIPSKSPHTQPVRTPASTKRLSKTGLSKVDVRQEPSTLGKRTKSPGRAPGTPAPVQEENDSTAFMETPKQKLDFAGNSSGSKRRSRTSKNRSQPLEDLDGFQELFQTPAGASDSVTVEESAKISLESSQAEPVKTPASTKRRSKMSLMKVDMKELSILEKQTQSRGRDAGTPAPMQEGNGTTAIMETPKQKLDFTGNSTGHKRRPRTPKIRAQPLEDLDGFQELFQTPAGANDSVTVEESAKMSLESSQAEPVKTPASTKRLSKTDLSKVDVREDPSILGKKTKSPGRAPGTPAPVQEENDCTAYMETPKQKLESIENLTGLRKQSRTPKDITGFQDSFQIPDHANGPLVVVKTKKMFFNSPQPESAITRKSRERQSRASISKIDVKEELLESEEHLQLGEGVDTFQVSTNKVIRSSRKPAKRKLDSTAGMPNSKRMRCSSKDNTPCLEDLNGFQELFQMPGYANDSLTTGISTMLARSPQLGPVRTQINKKSLPKIILRKMDVTEEISGLWKQSLGRVHTTQEQEDNAIKAIMEIPKETLQTAADGTRLTRQPQTPKEKVQPLEDHSVFQELFQTSRYCSDPLIGNKQTRMSLRSPQPGFVRTPRTSKRLAKTSVGNIAVREKISPVSLPQCATGEVVHIPIGPEDDTENKGVKESTPQTLDSSASRTVSKRQQGAHEERPQFSGDLFHPQELFQTPASGKDPVTVDETTKIALQSPQPGHIINPASMKRQSNMSLRKDMREFSILEKQTQSRGRDAGTPAPMQEENGTTAIMETPKQKLDFIGNSTGHKRRPRTPKNRAQPLEDLDGFQELFQTPAGASDPVSVEESAKISLASSQAEPVRTPASTKRRSKTGLSKVDVRQEPSTLGKRMKSLGRAPGTPAPVQEENDSTAFMETPKQKLDFTGNSSGHKRRPQTPKIRAQPLEDLDGFQELFQTPAGANDSVTVEESVKMSLESSQAEPVKTPASTKRLSKTGLSKVDVREDPSILEKKTKSPGTPAPVQEENDCTAFMETPKQKLDFTGNSSGHKRRPRTPKIRAQPLEDLDGFQELFQTPAGASDSVTVEESAKMSLESSQAKPVKTPASTKRLSKTGLSKVDVREDPSTLGKKTKSPGRAPGTPAPVQEENDSTAFMETPKQKLDFAENSSGSKRRSRTSKNRSQPLEDLDGFQELFQTPAGASNPVSVEESAKISLESSQAEPVRTRASTKRLSKTGLNKMDVREGHSPLSKSSCASQKVMQTLTLGEDHGRETKDGKVLLAQKLEPAIYVTRGKRQQRSCKKRSQSPEDLSGVQEVFQTSGHNKDSVTVDNLAKLPSSSPPLEPTDTSVTSRRQARTGLRKVHVKNELSGGIMHPQISGEIVDLPREPEGEGKVIKTRKQSVKRKLDTEVNVPRSKRQRITRAEKTLEDLPGFQELCQAPSLVMDSVIVEKTPKMPDKSPEPVDTTSETQARRRLRRLVVTEEPIPQRKTTRVVRQTRNTQKEPISDNQGMEEFKESSVQKQDPSVSLTGRRNQPRTVKEKTQPLEELTSFQEETAKRISSKSPQPEEKETLAGLKRQLRIQLINDGVKEEPTAQRKQPSRETRNTLKEPVGDSINVEEVKKSTKQKIDPVASVPVSKRPRRVPKEKAQALELAGLKGPIQTLGHTDESASDKGPTQMPCNSLQPEQVDSFQSSPRRPRTRRGKVEADEEPSAVRKTVSTSRQTMRSRKVPEIGNNGTQVSKASIKQTLDTVAKVTGSRRQLRTHKDGVQPLEVLGDSKEITQISDHSEKLAHDTSILKSTQQQKPDSVKPLRTCRRVLRASKEDPKEVLVDTRDHATLQSKSNPLLSPKRKSARDGSIVRTRALRSLAPKQEATDEKPVPEKKRAASSKRHVSPEPVKMKHLKIVSNKLESVEEQVSTVMKTEEMEAKRENPVTPDQNSRYRKKTNVKQPRPKFDASAENVGIKKNEKTMKTASQETELQNPDDGAKKSTSRGQVSGKRTCLRSRGTTEMPQPCEAEEKTSKPAAEILIKPQEEKGVSGESDVRCLRSRKTRVALDSEPKPRVTRGTKKDAKTLKEDEDIVCTKKLRTRS.

Residues Cys-27–Ile-76 form the FHA domain. 2 stretches are compositionally biased toward basic and acidic residues: residues Glu-98 to Lys-107 and Leu-116 to Arg-126. 2 disordered regions span residues Glu-98–Ser-442 and Arg-473–Ser-572. Phosphoserine occurs at positions 125, 128, and 162. Composition is skewed to polar residues over residues Ser-165–Ser-177 and Ser-202–Ser-221. The span at Met-235–Glu-263 shows a compositional bias: basic and acidic residues. A Glycyl lysine isopeptide (Lys-Gly) (interchain with G-Cter in SUMO2) cross-link involves residue Lys-236. Ser-250, Ser-276, Ser-277, Ser-286, and Ser-287 each carry phosphoserine. Residues Ser-276–Ser-286 are compositionally biased toward polar residues. Phosphothreonine occurs at positions 307 and 316. Phosphoserine is present on residues Ser-321, Ser-337, Ser-373, Ser-498, Ser-503, and Ser-588. The interval Lys-455–Lys-618 is positively charged patch (CP). The PP1-binding domain maps to Lys-462–Thr-509. Positions Thr-614 to Asn-652 are disordered. Residues Val-616–Thr-634 show a composition bias toward basic residues. Polar residues predominate over residues Lys-636–Asn-652. Thr-701 is modified (phosphothreonine). Disordered regions lie at residues Leu-793 to Arg-815, Val-835 to Gln-901, and Lys-956 to Ile-989. Over residues Asp-855–Ala-864 the composition is skewed to polar residues. 2 stretches are compositionally biased toward basic and acidic residues: residues Arg-867–Ser-882 and Leu-975–Ile-989. K167R repeat units lie at residues Thr-994–Pro-1101, Lys-1108–Pro-1216, Ser-1228–Pro-1336, Ser-1348–Pro-1450, Lys-1461–Pro-1569, Thr-1582–Thr-1684, Lys-1696–Pro-1806, Glu-1817–Pro-1925, Ser-1937–Pro-2046, Val-2059–Pro-2163, Ser-2175–Pro-2284, Ser-2296–Thr-2405, Ala-2419–Pro-2526, Lys-2537–Glu-2639, Lys-2643–Thr-2748, and Thr-2762–Ile-2870. Residues Lys-1013 and Lys-1026 each participate in a glycyl lysine isopeptide (Lys-Gly) (interchain with G-Cter in SUMO2) cross-link. The residue at position 1062 (Ser-1062) is a Phosphoserine. Residue Lys-1082 forms a Glycyl lysine isopeptide (Lys-Gly) (interchain with G-Cter in SUMO1); alternate linkage. Lys-1082 is covalently cross-linked (Glycyl lysine isopeptide (Lys-Gly) (interchain with G-Cter in SUMO2); alternate). 2 disordered regions span residues Lys-1109–Gln-1321 and Gln-1334–Cys-1410. Residue Ser-1114 is modified to Phosphoserine. Polar residues predominate over residues Ser-1114 to Lys-1127. Phosphothreonine is present on Thr-1122. Ser-1125 bears the Phosphoserine mark. Thr-1150 carries the phosphothreonine modification. Position 1152 is a phosphoserine (Ser-1152). Phosphothreonine occurs at positions 1159 and 1175. Position 1189 is a phosphoserine (Ser-1189). Thr-1215 is subject to Phosphothreonine. Position 1235 is a phosphoserine (Ser-1235). Phosphothreonine is present on residues Thr-1243, Thr-1279, Thr-1295, Thr-1307, and Thr-1315. Residues Gly-1308–Lys-1317 show a composition bias toward basic residues. A Glycyl lysine isopeptide (Lys-Gly) (interchain with G-Cter in SUMO2) cross-link involves residue Lys-1317. Thr-1335 bears the Phosphothreonine mark. Residues Leu-1353–Lys-1368 are compositionally biased toward polar residues. Residue Ser-1356 is modified to Phosphoserine. Thr-1363 carries the post-translational modification Phosphothreonine. Phosphoserine is present on Ser-1366. Residues Ser-1371–Pro-1384 are compositionally biased toward basic and acidic residues. 2 positions are modified to phosphothreonine: Thr-1400 and Thr-1416. Phosphoserine is present on Ser-1469. Thr-1477 carries the phosphothreonine modification. A Phosphoserine modification is found at Ser-1480. Thr-1513 is subject to Phosphothreonine. Residues Arg-1526 to Lys-1550 are disordered. Ser-1542 and Ser-1587 each carry phosphoserine. Residue Lys-1609 is modified to N6-acetyllysine. A Glycyl lysine isopeptide (Lys-Gly) (interchain with G-Cter in SUMO2) cross-link involves residue Lys-1668. 2 positions are modified to phosphothreonine: Thr-1684 and Thr-1712. Residue Ser-1734 is modified to Phosphoserine. The segment at Ile-1749 to Phe-1797 is disordered. Residues Ser-1765–Gln-1782 show a composition bias toward polar residues. Thr-1766 bears the Phosphothreonine mark. Ser-1779 carries the phosphoserine modification. The residue at position 1805 (Thr-1805) is a Phosphothreonine. Ser-1825 is modified (phosphoserine). Phosphothreonine is present on residues Thr-1859, Thr-1868, Thr-1884, and Thr-1924. Residues Pro-1925–Leu-2033 form a disordered region. Ser-1944 carries the post-translational modification Phosphoserine. An N6-acetyllysine modification is found at Lys-1966. Thr-1989, Thr-2005, and Thr-2025 each carry phosphothreonine. Lys-2027 participates in a covalent cross-link: Glycyl lysine isopeptide (Lys-Gly) (interchain with G-Cter in SUMO1); alternate. Lys-2027 participates in a covalent cross-link: Glycyl lysine isopeptide (Lys-Gly) (interchain with G-Cter in SUMO2); alternate. Thr-2045 bears the Phosphothreonine mark. The disordered stretch occupies residues Ala-2047–Glu-2112. Polar residues predominate over residues Leu-2063–Lys-2078. The residue at position 2065 (Ser-2065) is a Phosphoserine. Thr-2073 carries the post-translational modification Phosphothreonine. Phosphoserine occurs at positions 2076, 2095, and 2103. Basic and acidic residues predominate over residues Val-2088–Thr-2101. Phosphothreonine occurs at positions 2106 and 2122. Residues Lys-2124–Gln-2343 form a disordered region. Basic residues predominate over residues Gly-2135–Lys-2144. Thr-2162 carries the post-translational modification Phosphothreonine. Over residues Leu-2180–Lys-2195 the composition is skewed to polar residues. Phosphoserine is present on Ser-2182. Phosphothreonine is present on Thr-2190. The residue at position 2198 (Ser-2198) is a Phosphoserine. Position 2218 is a phosphothreonine (Thr-2218). Ser-2220 bears the Phosphoserine mark. A phosphothreonine mark is found at Thr-2227, Thr-2243, and Thr-2283. Ser-2303 is modified (phosphoserine). Phosphothreonine occurs at positions 2311 and 2348. Positions Arg-2378–Ser-2390 are enriched in basic residues. Positions Arg-2378–Lys-2447 are disordered. Phosphoserine is present on residues Ser-2390 and Ser-2392. Thr-2405 is modified (phosphothreonine). Ser-2423 and Ser-2425 each carry phosphoserine. Residue Lys-2451 forms a Glycyl lysine isopeptide (Lys-Gly) (interchain with G-Cter in SUMO1) linkage. Phosphoserine is present on residues Ser-2464, Ser-2487, Ser-2545, and Ser-2592. Basic and acidic residues predominate over residues Thr-2538–Glu-2547. Disordered regions lie at residues Thr-2538 to Lys-2828 and His-2879 to Thr-3160. Over residues Val-2605–Arg-2622 the composition is skewed to polar residues. Ser-2649 is modified (phosphoserine). Basic and acidic residues-rich tracts occupy residues Gly-2673 to Val-2697 and Glu-2704 to Ile-2714. A Glycyl lysine isopeptide (Lys-Gly) (interchain with G-Cter in SUMO1); alternate cross-link involves residue Lys-2675. Lys-2675 is covalently cross-linked (Glycyl lysine isopeptide (Lys-Gly) (interchain with G-Cter in SUMO2); alternate). 2 stretches are compositionally biased toward polar residues: residues Met-2764–Pro-2781 and Ile-2883–Pro-2892. A phosphoserine mark is found at Ser-2768 and Ser-2780. A compositionally biased stretch (basic and acidic residues) spans Ala-2907–Ala-2923. Lys-2909 is covalently cross-linked (Glycyl lysine isopeptide (Lys-Gly) (interchain with G-Cter in SUMO2)). Position 2928 is an N6-acetyllysine (Lys-2928). Residues Glu-2959–Arg-2971 are compositionally biased toward basic and acidic residues. Ala-2973 to Ser-2980 provides a ligand contact to ATP. Residue Ser-2980 is modified to Phosphoserine. Positions Lys-3008 to Asn-3018 are enriched in basic and acidic residues. Thr-3021 bears the Phosphothreonine mark. Over residues Pro-3039–Met-3057 the composition is skewed to basic and acidic residues. Polar residues predominate over residues Lys-3058 to Gln-3067. Phosphoserine is present on Ser-3061. 2 stretches are compositionally biased toward basic and acidic residues: residues Pro-3118–Cys-3132 and Val-3140–Thr-3160.

Interacts with KIF15. Interacts (via the FHA domain) with NIFK. Interacts with PPP1CC. Component of a complex at least composed of ZNF335, HCFC1, CCAR2, EMSY, MKI67, RBBP5, ASH2L and WDR5; the complex is formed as a result of interactions between components of a nuclear receptor-mediated transcription complex and a histone methylation complex. Interacts with ZNF335. Post-translationally, hyperphosphorylated by CDK1 in mitosis; hyperphosphorylatiom prevents undergoing liquid-liquid phase separation. Dephosphorylated by PPP1CC at the onset of anaphase. Dephosphorylation by protein phosphatase 2A (PP2A) and simultaneous exposure of the positively charged patch (CP) during mitotic exit induce the RNA-dependent formation of a liquid-like condensed phase on the chromosome surface. In terms of processing, ubiquitinated by the APC/C complex after neuronal progenitors exit mitosis during brain development, leading to clearance from constitutive heterochromatin. As to expression, mainly present in proliferating cells (at protein level).

Its subcellular location is the chromosome. It is found in the nucleus. It localises to the nucleolus. Protein that associates with the surface of mitotic chromosomes and acts both as a chromosome repellent during early mitosis and chromosome attractant during late mitosis. Required to maintain individual mitotic chromosomes dispersed in the cytoplasm following nuclear envelope disassembly. During early mitosis, relocalizes from nucleoli to the chromosome surface where it forms extended brush structures that cover a substantial fraction of the chromosome surface. The MKI67 brush structure prevents chromosomes from collapsing into a single chromatin mass by forming a steric and electrostatic charge barrier: the protein has a high net electrical charge and acts as a surfactant, dispersing chromosomes and enabling independent chromosome motility. During mitotic anaphase, the MKI67 brush structure collapses and MKI67 switches from a chromosome repellent to a chromosome attractant to promote chromosome clustering and facilitate the exclusion of large cytoplasmic particles from the future nuclear space. Mechanistically, dephosphorylation during mitotic exit and simultaneous exposure of a conserved basic patch induce the RNA-dependent formation of a liquid-like condensed phase on the chromosome surface, promoting coalescence of neighboring chromosome surfaces and clustering of chromosomes. Binds premature ribosomal RNAs during anaphase; promoting liquid-liquid phase separation. Binds DNA, with a preference for supercoiled DNA and AT-rich DNA. Does not contribute to the internal structure of mitotic chromosomes. May play a role in chromatin organization; it is however unclear whether it plays a direct role in chromatin organization or whether it is an indirect consequence of its function in mitotic chromosome. The protein is Proliferation marker protein Ki-67 of Mus musculus (Mouse).